A 271-amino-acid chain; its full sequence is Mannosyl-3-phosphoglycerate phosphatase (271 aa).

The Nucleophile role is filled by Asp13. Residues Asp13, Asp15, and Asp214 each contribute to the Mg(2+) site.

Belongs to the HAD-like hydrolase superfamily. MPGP family. Mg(2+) is required as a cofactor.

It is found in the cytoplasm. It carries out the reaction 2-O-(alpha-D-mannosyl)-3-phosphoglycerate + H2O = (2R)-2-O-(alpha-D-mannosyl)-glycerate + phosphate. This chain is Mannosyl-3-phosphoglycerate phosphatase (yedP), found in Salmonella choleraesuis (strain SC-B67).